Reading from the N-terminus, the 703-residue chain is Protein teflon (703 aa).

The segment at 32–55 (MLCHFCKDIFTHLPEFMRHLQWSH) adopts a C2H2-type 1 zinc-finger fold. Disordered stretches follow at residues 78 to 111 (SSED…PGSS), 140 to 161 (EQSY…ARKP), 205 to 239 (NDVS…MPSL), and 339 to 434 (SQQP…SKLE). The span at 84–94 (QSQANSCSSGD) shows a compositional bias: polar residues. Positions 148–161 (PDSRTEGFRCARKP) are enriched in basic and acidic residues. 2 stretches are compositionally biased toward polar residues: residues 339–352 (SQQP…NNAV) and 364–373 (SLTVISSSPI). 2 C2H2-type zinc fingers span residues 649-672 (YFCE…QSVH) and 677-700 (FTCS…KTVH).

Belongs to the Teflon family.

The protein localises to the nucleus. Its subcellular location is the chromosome. Its function is as follows. Specifically required in males for proper segregation of autosomal bivalents at meiosis I. Expression is required in the male germ line prior to spermatocyte stage S4. May have a role as a bridging molecule maintaining adhesion to hold autosome bivalents together via heterochromatic connections. The protein is Protein teflon of Drosophila persimilis (Fruit fly).